A 214-amino-acid chain; its full sequence is NADH-quinone oxidoreductase subunit C (214 aa).

The protein belongs to the complex I 30 kDa subunit family. In terms of assembly, NDH-1 is composed of 14 different subunits. Subunits NuoB, C, D, E, F, and G constitute the peripheral sector of the complex.

The protein localises to the cell inner membrane. It catalyses the reaction a quinone + NADH + 5 H(+)(in) = a quinol + NAD(+) + 4 H(+)(out). NDH-1 shuttles electrons from NADH, via FMN and iron-sulfur (Fe-S) centers, to quinones in the respiratory chain. The immediate electron acceptor for the enzyme in this species is believed to be ubiquinone. Couples the redox reaction to proton translocation (for every two electrons transferred, four hydrogen ions are translocated across the cytoplasmic membrane), and thus conserves the redox energy in a proton gradient. The protein is NADH-quinone oxidoreductase subunit C of Caulobacter sp. (strain K31).